Here is a 424-residue protein sequence, read N- to C-terminus: L-glutamine:2-deoxy-scyllo-inosose aminotransferase (424 aa).

The residue at position 202 (Lys-202) is an N6-(pyridoxal phosphate)lysine.

The protein belongs to the DegT/DnrJ/EryC1 family. L-glutamine:2-deoxy-scyllo-inosose/scyllo-inosose aminotransferase subfamily. Pyridoxal 5'-phosphate serves as cofactor.

It catalyses the reaction 2-deoxy-L-scyllo-inosose + L-glutamine = 2-deoxy-scyllo-inosamine + 2-oxoglutaramate. It carries out the reaction 3-amino-2,3-dideoxy-scyllo-inosose + L-glutamine = 2-deoxystreptamine + 2-oxoglutaramate. It functions in the pathway metabolic intermediate biosynthesis; 2-deoxystreptamine biosynthesis; 2-deoxystreptamine from D-glucose 6-phosphate: step 2/4. The protein operates within antibiotic biosynthesis; lividomycin biosynthesis. In terms of biological role, catalyzes the PLP-dependent transamination of 2-deoxy-scyllo-inosose (2-DOI) to form 2-deoxy-scyllo-inosamine (2-DOIA) using L-glutamine as the amino donor. Also catalyzes the transamination of 3-amino-2,3-dideoxy-scyllo-inosose (keto-2-DOIA) into 2-deoxystreptamine (2-DOS). This Streptomyces lividus protein is L-glutamine:2-deoxy-scyllo-inosose aminotransferase (livS).